Reading from the N-terminus, the 200-residue chain is MLDVIELDFDYHDQPLLQQISFHLPAGGLLHLKGSNGAGKTTLLKLIAGLLNPEKGEILFERRSIKKDLCTYQKQLCFVGHRSGINPYLTLRENCLYDIHFSPGAVGITELCRLFSLEHLIDYPCGLLSSGQKRQVALLRLWMSKAKLWLLDEPLVALDELSLLTIIRKIQEHRAKGGAVLLTSHQDLPLNKADYEEYHL.

Residues 2–200 form the ABC transporter domain; sequence LDVIELDFDY…NKADYEEYHL (199 aa). 34 to 41 serves as a coordination point for ATP; sequence GSNGAGKT.

It belongs to the ABC transporter superfamily. CcmA exporter (TC 3.A.1.107) family. In terms of assembly, the complex is composed of two ATP-binding proteins (CcmA) and two transmembrane proteins (CcmB).

The protein resides in the cell inner membrane. It catalyses the reaction heme b(in) + ATP + H2O = heme b(out) + ADP + phosphate + H(+). Its function is as follows. Part of the ABC transporter complex CcmAB involved in the biogenesis of c-type cytochromes; once thought to export heme, this seems not to be the case, but its exact role is uncertain. Responsible for energy coupling to the transport system. The sequence is that of Cytochrome c biogenesis ATP-binding export protein CcmA from Legionella pneumophila.